Consider the following 615-residue polypeptide: Dihydroxy-acid dehydratase (615 aa).

Aspartate 85 is a binding site for Mg(2+). A [2Fe-2S] cluster-binding site is contributed by cysteine 126. Residues aspartate 127 and lysine 128 each contribute to the Mg(2+) site. At lysine 128 the chain carries N6-carboxylysine. A [2Fe-2S] cluster-binding site is contributed by cysteine 199. Glutamate 495 provides a ligand contact to Mg(2+). The Proton acceptor role is filled by serine 521.

This sequence belongs to the IlvD/Edd family. As to quaternary structure, homodimer. The cofactor is [2Fe-2S] cluster. It depends on Mg(2+) as a cofactor.

It catalyses the reaction (2R)-2,3-dihydroxy-3-methylbutanoate = 3-methyl-2-oxobutanoate + H2O. It carries out the reaction (2R,3R)-2,3-dihydroxy-3-methylpentanoate = (S)-3-methyl-2-oxopentanoate + H2O. The protein operates within amino-acid biosynthesis; L-isoleucine biosynthesis; L-isoleucine from 2-oxobutanoate: step 3/4. Its pathway is amino-acid biosynthesis; L-valine biosynthesis; L-valine from pyruvate: step 3/4. Its function is as follows. Functions in the biosynthesis of branched-chain amino acids. Catalyzes the dehydration of (2R,3R)-2,3-dihydroxy-3-methylpentanoate (2,3-dihydroxy-3-methylvalerate) into 2-oxo-3-methylpentanoate (2-oxo-3-methylvalerate) and of (2R)-2,3-dihydroxy-3-methylbutanoate (2,3-dihydroxyisovalerate) into 2-oxo-3-methylbutanoate (2-oxoisovalerate), the penultimate precursor to L-isoleucine and L-valine, respectively. This chain is Dihydroxy-acid dehydratase, found in Mannheimia succiniciproducens (strain KCTC 0769BP / MBEL55E).